A 135-amino-acid polypeptide reads, in one-letter code: Transcriptional activator protein (135 aa).

The short motif at 17–32 (KAQHKVAKKRAIRRSR) is the Nuclear localization signal element. The segment at 37 to 54 (CGCSYYIHINCRNYGFSH) is a zinc-finger region. Positions 82 to 102 (AAPSNSSRVPDVCDPNTDNVQ) are disordered. The transactivation stretch occupies residues 120–135 (ALPLFDGDFWDDIIDF).

Belongs to the geminiviridae transcriptional activator protein family. As to quaternary structure, monomer. Homodimer. Homooligomer. Self-interaction correlates with nuclear localization and efficient activation of transcription. Monomers suppress local silencing by interacting with and inactivating host adenosine kinase 2 (ADK2) in the cytoplasm. Interacts with and inhibits host SNF1 kinase. Binds to ssDNA. Post-translationally, phosphorylated.

It is found in the host nucleus. The protein localises to the host cytoplasm. In terms of biological role, strong activator of the late viral genes promoters. Enhances the expression of the capsid protein and nuclear shuttle protein. Acts as a suppressor of RNA-mediated gene silencing, also known as post-transcriptional gene silencing (PTGS), a mechanism of plant viral defense that limits the accumulation of viral RNAs. Suppresses the host RNA silencing by inhibiting adenosine kinase 2 (ADK2), a kinase involved in a general methylation pathway. Also suppresses the host basal defense by interacting with and inhibiting SNF1 kinase, a key regulator of cell metabolism implicated in innate antiviral defense. Determines pathogenicity. This is Transcriptional activator protein from Mungbean yellow mosaic virus (strain Vigna) (MYMV).